Here is a 230-residue protein sequence, read N- to C-terminus: LexA repressor (230 aa).

Residues Ile28 to Lys48 constitute a DNA-binding region (H-T-H motif). Residues Ser148 and Lys185 each act as for autocatalytic cleavage activity in the active site.

Belongs to the peptidase S24 family. In terms of assembly, homodimer.

The catalysed reaction is Hydrolysis of Ala-|-Gly bond in repressor LexA.. Functionally, represses a number of genes involved in the response to DNA damage (SOS response), including recA and lexA. In the presence of single-stranded DNA, RecA interacts with LexA causing an autocatalytic cleavage which disrupts the DNA-binding part of LexA, leading to derepression of the SOS regulon and eventually DNA repair. The sequence is that of LexA repressor from Anaeromyxobacter sp. (strain K).